The following is a 1387-amino-acid chain: DNA-directed RNA polymerase subunit beta'' (1387 aa).

Zn(2+) is bound by residues cysteine 224, cysteine 295, cysteine 302, and cysteine 305.

The protein belongs to the RNA polymerase beta' chain family. RpoC2 subfamily. As to quaternary structure, in plastids the minimal PEP RNA polymerase catalytic core is composed of four subunits: alpha, beta, beta', and beta''. When a (nuclear-encoded) sigma factor is associated with the core the holoenzyme is formed, which can initiate transcription. The cofactor is Zn(2+).

Its subcellular location is the plastid. The protein localises to the chloroplast. It carries out the reaction RNA(n) + a ribonucleoside 5'-triphosphate = RNA(n+1) + diphosphate. DNA-dependent RNA polymerase catalyzes the transcription of DNA into RNA using the four ribonucleoside triphosphates as substrates. The protein is DNA-directed RNA polymerase subunit beta'' of Panax ginseng (Korean ginseng).